Reading from the N-terminus, the 391-residue chain is NAD(P)H-quinone oxidoreductase subunit H, chloroplastic (391 aa).

This sequence belongs to the complex I 49 kDa subunit family. NDH is composed of at least 16 different subunits, 5 of which are encoded in the nucleus.

It localises to the plastid. It is found in the chloroplast thylakoid membrane. It carries out the reaction a plastoquinone + NADH + (n+1) H(+)(in) = a plastoquinol + NAD(+) + n H(+)(out). The catalysed reaction is a plastoquinone + NADPH + (n+1) H(+)(in) = a plastoquinol + NADP(+) + n H(+)(out). In terms of biological role, NDH shuttles electrons from NAD(P)H:plastoquinone, via FMN and iron-sulfur (Fe-S) centers, to quinones in the photosynthetic chain and possibly in a chloroplast respiratory chain. The immediate electron acceptor for the enzyme in this species is believed to be plastoquinone. Couples the redox reaction to proton translocation, and thus conserves the redox energy in a proton gradient. In Mesostigma viride (Green alga), this protein is NAD(P)H-quinone oxidoreductase subunit H, chloroplastic.